We begin with the raw amino-acid sequence, 146 residues long: Large-conductance mechanosensitive channel (146 aa).

Transmembrane regions (helical) follow at residues 15-35 (VSLA…TSLV) and 81-101 (GIFI…FIII).

This sequence belongs to the MscL family. Homopentamer.

It localises to the cell membrane. Channel that opens in response to stretch forces in the membrane lipid bilayer. May participate in the regulation of osmotic pressure changes within the cell. This is Large-conductance mechanosensitive channel from Clostridium beijerinckii (strain ATCC 51743 / NCIMB 8052) (Clostridium acetobutylicum).